A 310-amino-acid polypeptide reads, in one-letter code: N-acetyl-gamma-glutamyl-phosphate reductase (310 aa).

The active site involves cysteine 117.

It belongs to the NAGSA dehydrogenase family. Type 2 subfamily.

It is found in the cytoplasm. The catalysed reaction is N-acetyl-L-glutamate 5-semialdehyde + phosphate + NADP(+) = N-acetyl-L-glutamyl 5-phosphate + NADPH + H(+). It functions in the pathway amino-acid biosynthesis; L-arginine biosynthesis; N(2)-acetyl-L-ornithine from L-glutamate: step 3/4. Catalyzes the NADPH-dependent reduction of N-acetyl-5-glutamyl phosphate to yield N-acetyl-L-glutamate 5-semialdehyde. The sequence is that of N-acetyl-gamma-glutamyl-phosphate reductase from Sinorhizobium medicae (strain WSM419) (Ensifer medicae).